A 566-amino-acid chain; its full sequence is DNA helicase/primase (566 aa).

Positions 17, 20, 36, and 39 each coordinate Zn(2+). The C4-like; zinc ribbon fold zinc finger occupies 17 to 39; that stretch reads CDNCGSSDGNSLFSDGHTFCYVC. The region spanning 151–238 is the Toprim domain; that stretch reads KKIVVTEGEI…RVAVLPCKDA (88 aa). The Mg(2+) site is built by Glu157, Asp207, and Asp237. An SF4 helicase domain is found at 281–548; it reads SEESVGLLFS…TGWLEPSSYS (268 aa). 312-319 serves as a coordination point for ATP; that stretch reads SGSGMGKS. A disordered region spans residues 543–566; sequence EPSSYSGEEESHSESTDWSNDTDF. Positions 550–566 are binding to viral DNA polymerase; that stretch reads EEESHSESTDWSNDTDF.

It belongs to the Teseptimavirus DNA helicase/primase family. Homohexamer. Assembles as a hexamer onto linear or circular ssDNA in the presence of ATP or dTTP. Present in a mixture of heptamers and hexamers in the absence of DNA. Interacts (via C-terminus) with the viral DNA polymerase that is bound to DNA; this interaction is essential to initiate leading-strand DNA synthesis. The priming complex consists of 2 DNA polymerases and 1 helicase-primase hexamer that assemble on the DNA template. Interacts with the single-stranded DNA-binding protein. Part of the replicase complex that includes the DNA polymerase, thioredoxin, the primase/helicase and the single-stranded DNA binding protein. It depends on Mg(2+) as a cofactor.

The enzyme catalyses ATP + H2O = ADP + phosphate + H(+). Functionally, ATP-dependent DNA helicase and primase essential for viral DNA replication and recombination. The helicase moves 5' -&gt; 3' on the lagging strand template, unwinding the DNA duplex ahead of the leading strand polymerase at the replication fork and generating ssDNA for both leading and lagging strand synthesis. ATP or dTTP hydrolysis propels each helicase domain to translocate 2 nt per step sequentially along DNA. Mediates strand transfer when a joint molecule is available and participates in recombinational DNA repair through its role in strand exchange. Primase activity synthesizes short RNA primers at the sequence 5'-GTC-3' on the lagging strand that the polymerase elongates using dNTPs and providing the primase is still present. In Escherichia phage T7 (Bacteriophage T7), this protein is DNA helicase/primase.